A 197-amino-acid polypeptide reads, in one-letter code: Adenylate kinase isoenzyme 6 homolog FAP7 (197 aa).

ATP-binding residues include G17, G19, K20, S21, and S22. The NMPbind stretch occupies residues 38–61 (NISDFAKDNDCFEGYDEGRKSHIV). The interval 113–123 (ARGYHDSKIEE) is LID. R114 is an ATP binding site. The segment at 176–197 (PDGVTNEYQGPRSDDEDDEDSE) is disordered. Phosphotyrosine is present on Y183. 2 positions are modified to phosphoserine: S188 and S196.

The protein belongs to the adenylate kinase family. AK6 subfamily. As to quaternary structure, interacts with small ribosomal subunit protein uS11B/RPS14B. Not a structural component of 43S pre-ribosomes, but transiently interacts with them by binding to uS11/RPS14.

Its subcellular location is the cytoplasm. The protein localises to the nucleus. The enzyme catalyses AMP + ATP = 2 ADP. The catalysed reaction is ATP + H2O = ADP + phosphate + H(+). In terms of biological role, broad-specificity nucleoside monophosphate (NMP) kinase that catalyzes the reversible transfer of the terminal phosphate group between nucleoside triphosphates and monophosphates. Also has ATPase activity. Involved in the late cytoplasmic maturation steps of the 40S ribosomal particles, specifically 18S rRNA maturation. Required for cleavage of the 20S pre-rRNA at site D in the cytoplasm. While NMP activity is not required for ribosome maturation, ATPase activity is. Associates transiently with small ribosomal subunit protein uS11. ATP hydrolysis breaks the interaction with uS11. May temporarily remove uS11 from the ribosome to enable a conformational change of the ribosomal RNA that is needed for the final maturation step of the small ribosomal subunit. Promotes formation of the rotated state in 80S-like ribosomes, a key intermediate in translocation, thereby releasing the essential assembly factor DIM1 from pre-40S subunits. Its NMP activity may have a role in nuclear energy homeostasis. Involved in oxidative stress response. Required for POS9-dependent target gene transcription upon oxidative stress. The polypeptide is Adenylate kinase isoenzyme 6 homolog FAP7 (Saccharomyces cerevisiae (strain ATCC 204508 / S288c) (Baker's yeast)).